A 366-amino-acid polypeptide reads, in one-letter code: tRNA/tmRNA (uracil-C(5))-methyltransferase (366 aa).

Positions 190, 218, 223, 239, and 299 each coordinate S-adenosyl-L-methionine. The Nucleophile role is filled by cysteine 324. Glutamate 358 (proton acceptor) is an active-site residue.

Belongs to the class I-like SAM-binding methyltransferase superfamily. RNA M5U methyltransferase family. TrmA subfamily.

The catalysed reaction is uridine(54) in tRNA + S-adenosyl-L-methionine = 5-methyluridine(54) in tRNA + S-adenosyl-L-homocysteine + H(+). It catalyses the reaction uridine(341) in tmRNA + S-adenosyl-L-methionine = 5-methyluridine(341) in tmRNA + S-adenosyl-L-homocysteine + H(+). Functionally, dual-specificity methyltransferase that catalyzes the formation of 5-methyluridine at position 54 (m5U54) in all tRNAs, and that of position 341 (m5U341) in tmRNA (transfer-mRNA). This is tRNA/tmRNA (uracil-C(5))-methyltransferase from Salmonella typhi.